The sequence spans 744 residues: Probable ubiquitin carboxyl-terminal hydrolase MINDY-4 (744 aa).

Phosphoserine occurs at positions 143, 220, and 224. The segment at 211–358 (GMMAGPVASS…QLVSDRTDDK (148 aa)) is disordered. The segment covering 265–277 (VPDSSSDSVSRSP) has biased composition (low complexity). Positions 290-299 (NVTSSSQGLS) are enriched in polar residues. Serine 295 carries the phosphoserine modification. Residues 300–310 (QRDRPRLRSVS) show a composition bias toward basic and acidic residues. Cysteine 443 serves as the catalytic Nucleophile. Histidine 664 (proton acceptor) is an active-site residue.

Belongs to the MINDY deubiquitinase family. FAM188 subfamily.

The enzyme catalyses Thiol-dependent hydrolysis of ester, thioester, amide, peptide and isopeptide bonds formed by the C-terminal Gly of ubiquitin (a 76-residue protein attached to proteins as an intracellular targeting signal).. Functionally, probable hydrolase that can remove 'Lys-48'-linked conjugated ubiquitin from proteins. The chain is Probable ubiquitin carboxyl-terminal hydrolase MINDY-4 (Mindy4) from Mus musculus (Mouse).